Consider the following 229-residue polypeptide: Urease accessory protein UreF (229 aa).

This sequence belongs to the UreF family. In terms of assembly, ureD, UreF and UreG form a complex that acts as a GTP-hydrolysis-dependent molecular chaperone, activating the urease apoprotein by helping to assemble the nickel containing metallocenter of UreC. The UreE protein probably delivers the nickel.

The protein resides in the cytoplasm. In terms of biological role, required for maturation of urease via the functional incorporation of the urease nickel metallocenter. In Nostoc sp. (strain PCC 7120 / SAG 25.82 / UTEX 2576), this protein is Urease accessory protein UreF.